The chain runs to 257 residues: Protein vip1 (257 aa).

Positions 3 to 76 (NQVIVTNISP…NKIQITSEDG (74 aa)) constitute an RRM domain. The tract at residues 74–99 (EDGGAASTTDQGGAGGDQAARQEDKP) is disordered. Over residues 75–84 (DGGAASTTDQ) the composition is skewed to low complexity. A phosphoserine mark is found at S132 and S177. A disordered region spans residues 217–257 (ARRLADAKNQAEGTASPASSTPTAPAEKEPTAPTTESKTTE). T230 carries the post-translational modification Phosphothreonine. Over residues 230-257 (TASPASSTPTAPAEKEPTAPTTESKTTE) the composition is skewed to low complexity. S232 and S235 each carry phosphoserine.

The polypeptide is Protein vip1 (vip1) (Schizosaccharomyces pombe (strain 972 / ATCC 24843) (Fission yeast)).